The chain runs to 309 residues: uncharacterized protein (309 aa).

Basic residues predominate over residues 1-11 (MPGNSRRRGAV). The segment at 1–69 (MPGNSRRRGA…PVKRTDETET (69 aa)) is disordered. G261, I281, and L290 together coordinate S-adenosyl-L-methionine.

The protein belongs to the class IV-like SAM-binding methyltransferase superfamily. RNA methyltransferase TrmH family.

This is an uncharacterized protein from Mycobacterium leprae (strain TN).